A 208-amino-acid chain; its full sequence is Uracil phosphoribosyltransferase (208 aa).

Residues Arg78, Arg103, and 130-138 contribute to the 5-phospho-alpha-D-ribose 1-diphosphate site; that span reads DPMLATGGS. Uracil contacts are provided by residues Ile193 and 198–200; that span reads GDA. Residue Asp199 coordinates 5-phospho-alpha-D-ribose 1-diphosphate.

The protein belongs to the UPRTase family. Requires Mg(2+) as cofactor.

The enzyme catalyses UMP + diphosphate = 5-phospho-alpha-D-ribose 1-diphosphate + uracil. The protein operates within pyrimidine metabolism; UMP biosynthesis via salvage pathway; UMP from uracil: step 1/1. Allosterically activated by GTP. In terms of biological role, catalyzes the conversion of uracil and 5-phospho-alpha-D-ribose 1-diphosphate (PRPP) to UMP and diphosphate. This is Uracil phosphoribosyltransferase from Glaesserella parasuis serovar 5 (strain SH0165) (Haemophilus parasuis).